Consider the following 605-residue polypeptide: Dolichyl-diphosphooligosaccharide--protein glycosyltransferase subunit 1 (605 aa).

The first 22 residues, 1–22 (MEAPIVLLLLLWLALAPTPGSA), serve as a signal peptide directing secretion. Over 23–437 (SSEAPPLVNE…FNKVLMLQEP (415 aa)) the chain is Lumenal. Lysine 185 bears the N6-acetyllysine mark. N-linked (GlcNAc...) asparagine glycosylation occurs at asparagine 297. The helical transmembrane segment at 438–455 (LLVVAAFYILFFTVIIYV) threads the bilayer. Residues 456-605 (RLDFSITKDP…TKIDHILDAL (150 aa)) lie on the Cytoplasmic side of the membrane. Lysine 536 is modified (N6-acetyllysine; alternate). Residue lysine 536 forms a Glycyl lysine isopeptide (Lys-Gly) (interchain with G-Cter in SUMO2); alternate linkage.

It belongs to the OST1 family. As to quaternary structure, component of the oligosaccharyltransferase (OST) complex. OST exists in two different complex forms which contain common core subunits RPN1, RPN2, OST48, OST4, DAD1 and TMEM258, either STT3A or STT3B as catalytic subunits, and form-specific accessory subunits. STT3A complex assembly occurs through the formation of 3 subcomplexes. Subcomplex 1 contains RPN1 and TMEM258, subcomplex 2 contains the STT3A-specific subunits STT3A, DC2/OSTC, and KCP2 as well as the core subunit OST4, and subcomplex 3 contains RPN2, DAD1, and OST48. The STT3A complex can form stable complexes with the Sec61 complex or with both the Sec61 and TRAP complexes. Interacts with TMEM35A/NACHO. In terms of processing, ubiquitinated by the ECS(ASB11) complex. Ufmylated by UFL1 in response to endoplasmic reticulum stress, promoting reticulophagy of endoplasmic reticulum sheets. As to expression, expressed in all tissues tested.

The protein resides in the endoplasmic reticulum membrane. Its pathway is protein modification; protein glycosylation. Its function is as follows. Subunit of the oligosaccharyl transferase (OST) complex that catalyzes the initial transfer of a defined glycan (Glc(3)Man(9)GlcNAc(2) in eukaryotes) from the lipid carrier dolichol-pyrophosphate to an asparagine residue within an Asn-X-Ser/Thr consensus motif in nascent polypeptide chains, the first step in protein N-glycosylation. N-glycosylation occurs cotranslationally and the complex associates with the Sec61 complex at the channel-forming translocon complex that mediates protein translocation across the endoplasmic reticulum (ER). All subunits are required for a maximal enzyme activity. In Rattus norvegicus (Rat), this protein is Dolichyl-diphosphooligosaccharide--protein glycosyltransferase subunit 1.